Reading from the N-terminus, the 669-residue chain is DNA ligase (669 aa).

NAD(+) is bound by residues 33 to 37 (DAEYD), 82 to 83 (SL), and Glu-114. Lys-116 acts as the N6-AMP-lysine intermediate in catalysis. Residues Arg-137, Glu-174, Lys-291, and Lys-315 each coordinate NAD(+). Zn(2+) is bound by residues Cys-409, Cys-412, Cys-427, and Cys-433. A BRCT domain is found at 593–669 (EIPQPLAGKV…QTEQDLLALL (77 aa)).

It belongs to the NAD-dependent DNA ligase family. LigA subfamily. It depends on Mg(2+) as a cofactor. Requires Mn(2+) as cofactor.

It catalyses the reaction NAD(+) + (deoxyribonucleotide)n-3'-hydroxyl + 5'-phospho-(deoxyribonucleotide)m = (deoxyribonucleotide)n+m + AMP + beta-nicotinamide D-nucleotide.. DNA ligase that catalyzes the formation of phosphodiester linkages between 5'-phosphoryl and 3'-hydroxyl groups in double-stranded DNA using NAD as a coenzyme and as the energy source for the reaction. It is essential for DNA replication and repair of damaged DNA. This is DNA ligase from Vibrio vulnificus (strain YJ016).